The following is a 180-amino-acid chain: DNA-directed RNA polymerase subunit Rpo7 (180 aa).

The region spanning 82–165 (QEVVEGEVLQ…RLPRIALTMR (84 aa)) is the S1 motif domain.

Belongs to the eukaryotic RPB7/RPC8 RNA polymerase subunit family. As to quaternary structure, part of the 13-subunit RNA polymerase complex. Forms a stalk with Rpo4 that extends from the main structure.

It is found in the cytoplasm. The enzyme catalyses RNA(n) + a ribonucleoside 5'-triphosphate = RNA(n+1) + diphosphate. DNA-dependent RNA polymerase (RNAP) catalyzes the transcription of DNA into RNA using the four ribonucleoside triphosphates as substrates. The protein is DNA-directed RNA polymerase subunit Rpo7 of Saccharolobus solfataricus (strain ATCC 35092 / DSM 1617 / JCM 11322 / P2) (Sulfolobus solfataricus).